Here is an 889-residue protein sequence, read N- to C-terminus: Translation initiation factor IF-2 (889 aa).

Positions 1–299 are disordered; the sequence is MTDNKDDKTL…EKFKRSQMQE (299 aa). The span at 61 to 76 shows a compositional bias: low complexity; that stretch reads ITPVAATPAARPAEQR. The segment covering 77-93 has biased composition (pro residues); it reads PMPPQPSGRPAPQPQPH. The segment covering 116–182 has biased composition (basic and acidic residues); it reads MEARRRALAE…EAEKTEEKVE (67 aa). Low complexity predominate over residues 196 to 215; the sequence is RPQPGRAAPAATPAAPDGAA. Positions 220-231 are enriched in basic and acidic residues; sequence RGTESEEDERRR. The tr-type G domain maps to 387–554; that stretch reads SRPPIVTIMG…AILLQSEILD (168 aa). The tract at residues 396–403 is G1; sequence GHVDHGKT. 396 to 403 serves as a coordination point for GTP; that stretch reads GHVDHGKT. The G2 stretch occupies residues 421 to 425; sequence GITQH. Residues 442 to 445 form a G3 region; sequence DTPG. GTP-binding positions include 442–446 and 496–499; these read DTPGH and NKID. The interval 496-499 is G4; the sequence is NKID. Residues 532 to 534 form a G5 region; the sequence is SAK.

It belongs to the TRAFAC class translation factor GTPase superfamily. Classic translation factor GTPase family. IF-2 subfamily.

The protein localises to the cytoplasm. Its function is as follows. One of the essential components for the initiation of protein synthesis. Protects formylmethionyl-tRNA from spontaneous hydrolysis and promotes its binding to the 30S ribosomal subunits. Also involved in the hydrolysis of GTP during the formation of the 70S ribosomal complex. This chain is Translation initiation factor IF-2, found in Rhizobium meliloti (strain 1021) (Ensifer meliloti).